The following is a 185-amino-acid chain: HTH-type transcriptional repressor OpcR (185 aa).

A DNA-binding region (H-T-H motif) is located at residues 49-73; the sequence is LSELSEATGMSKTRMSQVVREMIDA.

This sequence belongs to the GbsR family.

Its activity is regulated as follows. Is not choline-responsive. Functionally, negatively regulates the transcription of the opuC operon. In the absence of GbsR, is also a negative regulator of the opuB operon. Binds to an inverted repeat in the promoter region of the operons. In Bacillus subtilis (strain 168), this protein is HTH-type transcriptional repressor OpcR (opcR).